Here is a 1914-residue protein sequence, read N- to C-terminus: Fatty acid synthase beta subunit stcK (1914 aa).

Residues 17 to 395 (LYACFGGQGP…LEGTGMNVVN (379 aa)) are acetyltransferase (AT) domain. The tract at residues 446–692 (TRLLGTPHVM…LIVEAPGVKD (247 aa)) is enoyl reductase (ER) domain. The dehydratase (DH) domain stretch occupies residues 1009–1509 (GECAWGYAAL…RANDRLRMEI (501 aa)). The MaoC-like domain maps to 1398–1532 (FLNRHGAPRV…VRVLKESTGE (135 aa)). The segment at 1548–1900 (YVFTGQGTQE…IRLVQGVTQS (353 aa)) is malonyl/palmitoyl transferase (MT/PT) domain.

This sequence belongs to the fungal fatty acid synthetase subunit beta family. As to quaternary structure, [Alpha(6)beta(6)] hexamers of two multifunctional subunits (alpha and beta).

It carries out the reaction acetyl-CoA + n malonyl-CoA + 2n NADPH + 4n H(+) = a long-chain-acyl-CoA + n CoA + n CO2 + 2n NADP(+).. It catalyses the reaction holo-[ACP] + acetyl-CoA = acetyl-[ACP] + CoA. The enzyme catalyses holo-[ACP] + malonyl-CoA = malonyl-[ACP] + CoA. The catalysed reaction is a (3R)-hydroxyacyl-[ACP] = a (2E)-enoyl-[ACP] + H2O. It carries out the reaction a 2,3-saturated acyl-[ACP] + NAD(+) = a (2E)-enoyl-[ACP] + NADH + H(+). It catalyses the reaction (9Z)-octadecenoyl-[ACP] + H2O = (9Z)-octadecenoate + holo-[ACP] + H(+). It functions in the pathway mycotoxin biosynthesis; sterigmatocystin biosynthesis. Fatty acid synthase beta subunit; part of the gene cluster that mediates the biosynthesis of sterigmatocystin (ST), a polyketide-derived furanocoumarin which is part of the most toxic and carcinogenic compounds among the known mycotoxins. The first step in the biosynthesis of sterigmatocystin is the production of hexanoate by the fatty acid synthase (FAS) units stcJ and stcK. The polyketide backbone is assembled by the non-reducing polyketide synthase stcA by condensation of the starter hexanoyl-CoA and 7 malonyl-CoA extender units followed by cyclization and release of norsolorinic acid. Norsolorinic acid is the first stable intermediate in the biosynthesis of sterigmatocystin and is converted into averantin (AVN) by the ketoreductase stcE which reduces the hexanoate ketone to an alcohol. Averantin is then oxidized into 5'-hydroxyaverantin (HAVN) by the cytochrome P450 monooxygenase stcF. 5'-hydroxyaverantin is further converted to 5'-oxyaverantin (OAVN) by the 5'-hydroxyaverantin dehydrogenase stcG. The next step is the conversion of OAVN into averufin (AVF) which is catalyzed by a yet to be identified enzyme. The cytochrome P450 monooxygenase stcB and the flavin-binding monooxygenase stcW are both required for the conversion of averufin to 1-hydroxyversicolorone. The esterase stcI probably catalyzes the formation of versiconal hemiacetal acetate from 1-hydroxyversicolorone. The oxydoreductase stcN then probably catalyzes the biosynthetic step from versiconal to versicolorin B (VERB). The next step is performed by the versicolorin B desaturase stcL to produce versicolorin A (VERA). The ketoreductase stcU and the cytochrome P450 monooxygenase stcS are involved in the conversion of versicolorin A to demethylsterigmatocystin. The Baeyer-Villiger oxidas stcQ and the reductase stcR might be involved in the biosynthetic step from versicolorin A to demethylsterigmatocystin. The final step in the biosynthesis of sterigmatocystin is the methylation of demethylsterigmatocystin catalyzed by the methyltransferase stcP. The sequence is that of Fatty acid synthase beta subunit stcK from Emericella nidulans (strain FGSC A4 / ATCC 38163 / CBS 112.46 / NRRL 194 / M139) (Aspergillus nidulans).